The primary structure comprises 263 residues: Complement control protein C3 (263 aa).

The signal sequence occupies residues 1–19 (MKVESVTFLTLLGIGCVLS). 4 consecutive Sushi domains span residues 20-83 (CCTI…QCIK), 84-145 (RRCP…ICES), 146-203 (VKCQ…TCQI), and 204-263 (VKCP…KCVR). 8 disulfide bridges follow: Cys-21–Cys-70, Cys-54–Cys-81, Cys-86–Cys-126, Cys-112–Cys-143, Cys-148–Cys-190, Cys-176–Cys-201, Cys-206–Cys-248, and Cys-234–Cys-261.

It belongs to the receptors of complement activation (RCA) family. In terms of assembly, heterodimer with A56 protein; disulfide-linked.

The protein localises to the virion membrane. It localises to the host cell membrane. It is found in the secreted. Functionally, serves to protect the virus against complement attack by inhibiting both classical and alternative pathways of complement activation. Binds C3b and C4b. In Vaccinia virus (strain Copenhagen) (VACV), this protein is Complement control protein C3.